The primary structure comprises 434 residues: Serine/threonine-protein kinase Sgk1-B (434 aa).

Residues 68–94 form a disordered region; it reads ESELLNENSSPPPSHSQQINLGPSSNP. Positions 101–358 constitute a Protein kinase domain; sequence FQFLKIIGKG…FMEIKNHIFF (258 aa). Residues 107-115 and Lys-130 each bind ATP; that span reads IGKGSFGKV. Asp-225 serves as the catalytic Proton acceptor. The region spanning 359–434 is the AGC-kinase C-terminal domain; sequence SPIDWDDLIN…SYAPPMDSYL (76 aa).

This sequence belongs to the protein kinase superfamily. AGC Ser/Thr protein kinase family.

The protein localises to the cytoplasm. The protein resides in the nucleus. It localises to the endoplasmic reticulum. It carries out the reaction L-seryl-[protein] + ATP = O-phospho-L-seryl-[protein] + ADP + H(+). The enzyme catalyses L-threonyl-[protein] + ATP = O-phospho-L-threonyl-[protein] + ADP + H(+). Functionally, protein kinase that may play an important role in cellular stress response. Plays an important role in activating certain potassium, sodium, and chloride channels, suggesting an involvement in the regulation of processes such as cell survival, neuronal excitability and renal sodium excretion. In Xenopus laevis (African clawed frog), this protein is Serine/threonine-protein kinase Sgk1-B (sgk1-b).